Here is a 30-residue protein sequence, read N- to C-terminus: Ribonuclease pancreatic (30 aa).

Residues 1–13 are compositionally biased toward basic and acidic residues; that stretch reads KETAAAKFERQHM. The segment at 1-21 is disordered; the sequence is KETAAAKFERQHMDPAPAAAX. Residues Lys7 and Arg10 each contribute to the substrate site. His12 functions as the Proton acceptor in the catalytic mechanism.

This sequence belongs to the pancreatic ribonuclease family. In terms of assembly, monomer. Interacts with and forms tight 1:1 complexes with RNH1. Dimerization of two such complexes may occur. Interaction with RNH1 inhibits this protein. Pancreas.

It localises to the secreted. The catalysed reaction is an [RNA] containing cytidine + H2O = an [RNA]-3'-cytidine-3'-phosphate + a 5'-hydroxy-ribonucleotide-3'-[RNA].. It carries out the reaction an [RNA] containing uridine + H2O = an [RNA]-3'-uridine-3'-phosphate + a 5'-hydroxy-ribonucleotide-3'-[RNA].. In terms of biological role, endonuclease that catalyzes the cleavage of RNA on the 3' side of pyrimidine nucleotides. Acts on single-stranded and double-stranded RNA. The protein is Ribonuclease pancreatic (RNASE1) of Odocoileus virginianus virginianus (Virginia white-tailed deer).